The primary structure comprises 355 residues: Membrane cofactor protein (355 aa).

Residues 1 to 42 (MTAAPLTPDPTHPRRRRKSYTFFSLGIYAEALLFLLSSLSDA) form the signal peptide. Sushi domains follow at residues 43 to 104 (CEPP…GCIK), 105 to 168 (VQCT…SCKK), 169 to 234 (VYCL…ECKV), and 235 to 294 (VKCP…QCLK). Over 43–326 (CEPPPPFEAM…GIFGQEFDAW (284 aa)) the chain is Extracellular. Intrachain disulfides connect Cys-107/Cys-149, Cys-135/Cys-166, Cys-171/Cys-219, Cys-200/Cys-232, Cys-237/Cys-279, and Cys-265/Cys-292. Asn-179 is a glycosylation site (N-linked (GlcNAc...) asparagine). O-linked (GalNAc...) threonine glycosylation is present at Thr-301. A helical transmembrane segment spans residues 327–347 (IIALIVVTSVVGVIVICLIIL). The Cytoplasmic segment spans residues 348–355 (RCSEYRKK).

As to quaternary structure, interacts with C3b. Interacts with C4b. Interacts with moesin/MSN. In terms of processing, O-glycosylated. N-glycosylated. Specifically expressed in testis. Within testis, present only in elongated spermatids and spermatozoa (at protein level).

The protein resides in the cytoplasmic vesicle. Its subcellular location is the secretory vesicle. It is found in the acrosome inner membrane. Its function is as follows. May be involved in the fusion of the spermatozoa with the oocyte during fertilization. The polypeptide is Membrane cofactor protein (Cd46) (Rattus norvegicus (Rat)).